We begin with the raw amino-acid sequence, 2130 residues long: DNA polymerase zeta catalytic subunit (2130 aa).

Disordered stretches follow at residues 528 to 635 (PAES…TGTL), 734 to 891 (GCEI…HDEA), 927 to 954 (FTPS…SNTP), and 1189 to 1243 (QAKD…SAAQ). Low complexity predominate over residues 553–574 (TPIKSISSKSKSSPSKTPTTPI). The segment covering 620–629 (PRLSLQLDQG) has biased composition (polar residues). The span at 735–753 (CEIERPHRSEGSALDELKP) shows a compositional bias: basic and acidic residues. Polar residues-rich tracts occupy residues 771 to 786 (SEIQ…TSLD), 794 to 808 (LSQS…SMNG), and 818 to 835 (DSSS…SVSE). A compositionally biased stretch (basic and acidic residues) spans 840-860 (LESKPKKSDETARSCDEKLQR). Positions 938-954 (TETTPQLSPKSNESNTP) are enriched in polar residues. The span at 1228–1243 (PSSQSSEQSVSSSAAQ) shows a compositional bias: low complexity. Positions 2041, 2045, 2054, and 2057 each coordinate Zn(2+). 4 residues coordinate [4Fe-4S] cluster: Cys2086, Cys2089, Cys2098, and Cys2103. A CysB motif motif is present at residues 2086-2103 (CQACCGRLGSLQCDSLDC).

Belongs to the DNA polymerase type-B family. Catalytic subunit of the zeta DNA polymerase complex, which consists of PolZ1/DNApol-zeta and the accessory component PolZ2/Rev7. Interacts with the apurinic/apyrimidinic (AP) endonuclease Rrp1; the interaction is likely indirect and mediated via PolZ2. The cofactor is [4Fe-4S] cluster.

It catalyses the reaction DNA(n) + a 2'-deoxyribonucleoside 5'-triphosphate = DNA(n+1) + diphosphate. Its activity is regulated as follows. Inhibited by tetracyclic diterpene antibiotic aphidicolin. Its function is as follows. As the catalytic subunit of the DNA polymerase zeta complex, plays a crucial role in translesion DNA synthesis (TLS) and various DNA repair mechanisms. Lacks an intrinsic 3'-5' exonuclease activity and thus has no proofreading function. During homologous recombination (HR) repair, has a overlapping role with the error-prone translesion polymerase eta to initiate repair synthesis which is completed by end joining or another polymerase that can bind and reinitiate synthesis. May participate in the Rrp1-dependent base excision repair (BER) pathway responsible for repair of DNA lesions that gives rise to apurinic/apyrimidinic (AP) sites. Unlike mammalian orthologs, it is not an error-prone polymerase. The sequence is that of DNA polymerase zeta catalytic subunit from Drosophila melanogaster (Fruit fly).